Reading from the N-terminus, the 348-residue chain is MSSSPEKKRRKKLSPESNSLPNDLIVTILARLSQSYYPKLSLVSKTFRAILASPELYQTRILLSRTETFLYVCLSFPGEPNPGWFTLYRKPNQTLTTKKKKNSVHLLAPILNSPPVEFPSLIAVGSYLYAFRAAIEEGTSDSLNCVEVYNTDTQTWIPVPPNKRIFKLQHMKGMLYMKVSKLLSFVAQDAEELAPLFPKLRSLLSTEVVAFKPKVSEGYEVLGFSVNTDLGRGSFCMIEEITYHYDPSVKFRWRRRQGGVWRSLVGLEGLPKFARYSSVKLADCGGKLVVLWHKYVPASGYEEKMVWCAEISLEKRSKKEIWGKIEWFDAVLRVPKYYQFVGAKSATV.

An F-box domain is found at 14–60; it reads SPESNSLPNDLIVTILARLSQSYYPKLSLVSKTFRAILASPELYQTR.

The protein is F-box protein At2g20380 of Arabidopsis thaliana (Mouse-ear cress).